The sequence spans 473 residues: H(+)/Cl(-) exchange transporter ClcA (473 aa).

The Cytoplasmic segment spans residues 1–32 (MKTDTPSLETPQAARLRRRQLIRQLLERDKTP). Residues 33–69 (LAILFMAAVVGTLVGLAAVAFDKGVAWLQNQRMGALV) traverse the membrane as a helical segment. Residues 70–76 (HTADNYP) lie on the Periplasmic side of the membrane. The helical transmembrane segment at 77-100 (LLLTVAFLCSAVLAMFGYFLVRKY) threads the bilayer. The Selectivity filter part_1 motif lies at 106 to 110 (GSGIP). Chloride is bound at residue Ser107. An intramembrane region (helical) is located at residues 109-116 (IPEIEGAL). Residues 117 to 123 (EDQRPVR) lie on the Cytoplasmic side of the membrane. 2 helical membrane-spanning segments follow: residues 124–141 (WWRV…TLGG) and 148–166 (EGPT…LDIF). Residues 146-150 (GREGP) carry the Selectivity filter part_2 motif. At 167-176 (RLKGDEARHT) the chain is on the cytoplasmic side. Intramembrane regions (helical) lie at residues 177–189 (LLAT…LAAA) and 193–201 (PLAGILFII). Residues 202-214 (EEMRPQFRYTLIS) are Cytoplasmic-facing. Residues 215 to 232 (IKAVFIGVIMSTIMYRIF) traverse the membrane as a helical segment. The Periplasmic segment spans residues 233-252 (NHEVALIDVGKLSDAPLNTL). Residues 253-281 (WLYLILGIIFGIFGPIFNKWVLGMQDLLH) form a helical membrane-spanning segment. Topologically, residues 282-287 (RVHGGN) are cytoplasmic. Residues 288-309 (ITKWILMGGAIGGLCGLLGFVA) form a helical membrane-spanning segment. Residues 310 to 329 (PATSGGGFNLIPIATAGNFS) lie on the Periplasmic side of the membrane. Helical transmembrane passes span 330–349 (MGML…LCFS) and 355–376 (GIFA…MVAV). The Selectivity filter part_3 motif lies at 355-359 (GIFAP). Residues Ile356 and Phe357 each contribute to the chloride site. Residues 377 to 386 (ELFPQYHLEA) are Periplasmic-facing. The helical intramembrane region spans 387-401 (GTFAIAGMGALLAAS). Residues 402–404 (IRA) constitute an intramembrane region (note=Loop between two helices). The segment at residues 405–416 (PLTGIILVLEMT) is an intramembrane region (helical). Positions 417–421 (DNYQL) form an intramembrane region, note=Loop between two helices. A helical transmembrane segment spans residues 422–438 (ILPMIITGLGATLLAQF). Residues 439–473 (TGGKPLYSAILARTLAKQEAEQLARSKAASASENT) are Cytoplasmic-facing. Residue Tyr445 participates in chloride binding.

The protein belongs to the chloride channel (TC 2.A.49) family. ClcA subfamily. As to quaternary structure, homodimer.

The protein localises to the cell inner membrane. It carries out the reaction 2 chloride(in) + H(+)(out) = 2 chloride(out) + H(+)(in). Functionally, proton-coupled chloride transporter. Functions as antiport system and exchanges two chloride ions for 1 proton. Probably acts as an electrical shunt for an outwardly-directed proton pump that is linked to amino acid decarboxylation, as part of the extreme acid resistance (XAR) response. This Escherichia coli O9:H4 (strain HS) protein is H(+)/Cl(-) exchange transporter ClcA.